A 327-amino-acid chain; its full sequence is Putative HTH-type transcriptional regulatory protein Mbar_A2318 (327 aa).

One can recognise an HTH cro/C1-type domain in the interval 132–190 (LKKARMGQSMSLGTLASMVGVSRRTISKYEEEGMDASIDVVLQLEDIFGVELAKPINIL). A DNA-binding region (H-T-H motif) is located at residues 143 to 162 (LGTLASMVGVSRRTISKYEE).

The polypeptide is Putative HTH-type transcriptional regulatory protein Mbar_A2318 (Methanosarcina barkeri (strain Fusaro / DSM 804)).